A 224-amino-acid chain; its full sequence is tRNA (guanine-N(7)-)-methyltransferase (224 aa).

Glu57, Asp82, and Asp109 together coordinate S-adenosyl-L-methionine. Asp167 lines the substrate pocket.

The protein belongs to the class I-like SAM-binding methyltransferase superfamily. TrmB family.

The enzyme catalyses guanosine(46) in tRNA + S-adenosyl-L-methionine = N(7)-methylguanosine(46) in tRNA + S-adenosyl-L-homocysteine. Its pathway is tRNA modification; N(7)-methylguanine-tRNA biosynthesis. Catalyzes the formation of N(7)-methylguanine at position 46 (m7G46) in tRNA. The sequence is that of tRNA (guanine-N(7)-)-methyltransferase from Chloroflexus aurantiacus (strain ATCC 29366 / DSM 635 / J-10-fl).